Consider the following 571-residue polypeptide: MALPRPSEAVPQDKVCYPPESSPQNLAAYYTPFPSYGHYRNSLATVEEDFQPFRQLEAAASAAPAMPPFPFRMAPPLLSPGLGLQREPLYDLPWYSKLPPWYPIPHVPREVPPFLSSSHEYAGASSEDLGHQIIGGDNESGPCCGPDTLIPPPPADASLLPEGLRTSQLLPCSPSKQSEDGPKPSNQEGKSPARFQFTEEDLHFVLYGVTPSLEHPASLHHAISGLLVPPDSSGSDSLPQTLDKDSLQLPEGLCLMQTVFGEVPHFGVFCSSFIAKGVRFGPFQGKVVNASEVKTYGDNSVMWEIFEDGHLSHFIDGKGGTGNWMSYVNCARFPKEQNLVAVQCQGHIFYESCKEIHQNQELLVWYGDCYEKFLDIPVSLQVTEPGKQPSGPSEESAEGYRCERCGKVFTYKYYRDKHLKYTPCVDKGDRKFPCSLCKRSFEKRDRLRIHILHVHEKHRPHKCSTCGKCFSQSSSLNKHMRVHSGDRPYQCVYCTKRFTASSILRTHIRQHSGEKPFKCKYCGKSFASHAAHDSHVRRSHKEDDGCSCSICGKIFSDQETFYSHMKFHEDY.

Phosphoserine is present on Ser79. Positions 129-191 (LGHQIIGGDN…PKPSNQEGKS (63 aa)) are disordered. Residues 165-176 (RTSQLLPCSPSK) show a composition bias toward polar residues. The interval 194-384 (RFQFTEEDLH…DIPVSLQVTE (191 aa)) is interaction with CBFA2T2. In terms of domain architecture, SET spans 251 to 367 (EGLCLMQTVF…QNQELLVWYG (117 aa)). The segment at 400–424 (YRCERCGKVFTYKYYRDKHLKYTPC) adopts a C2H2-type 1; atypical zinc-finger fold. C2H2-type zinc fingers lie at residues 432-455 (FPCS…LHVH), 461-483 (HKCS…MRVH), 489-511 (YQCV…IRQH), 517-540 (FKCK…RRSH), and 546-568 (CSCS…MKFH).

Belongs to the class V-like SAM-binding methyltransferase superfamily. Interacts with CBFA2T2. As to expression, expressed in embryonic stem cells. Tends to be overexpressed in breast cancer (at protein level).

Its subcellular location is the nucleus. Functionally, transcription factor that has both positive and negative roles on transcription. Required for the maintenance of embryonic stem cell identity and the reacquisition of pluripotency in somatic cells. May play an essential role in germ cell development at 2 levels: the reacquisition of potential pluripotency, including SOX2 up-regulation, and successful epigenetic reprogramming, characterized by EHMT1 repression. Its association with CBFA2T2 is required for the functions in pluripotency and germ cell formation. Directly up-regulates the expression of pluripotency gene POU5F1 through its proximal enhancer. Binds to the DNA consensus sequence 5'-GGTC[TC]CTAA-3'. This chain is PR domain zinc finger protein 14 (PRDM14), found in Homo sapiens (Human).